We begin with the raw amino-acid sequence, 1356 residues long: DNA-directed RNA polymerase subunit beta (1356 aa).

The protein belongs to the RNA polymerase beta chain family. The RNAP catalytic core consists of 2 alpha, 1 beta, 1 beta' and 1 omega subunit. When a sigma factor is associated with the core the holoenzyme is formed, which can initiate transcription.

The enzyme catalyses RNA(n) + a ribonucleoside 5'-triphosphate = RNA(n+1) + diphosphate. In terms of biological role, DNA-dependent RNA polymerase catalyzes the transcription of DNA into RNA using the four ribonucleoside triphosphates as substrates. This is DNA-directed RNA polymerase subunit beta from Caulobacter vibrioides (strain ATCC 19089 / CIP 103742 / CB 15) (Caulobacter crescentus).